Consider the following 939-residue polypeptide: Valine--tRNA ligase (939 aa).

The 'HIGH' region signature appears at Pro47–His57. The short motif at Lys563 to Ser567 is the 'KMSKS' region element. Lys566 is an ATP binding site. Positions Glu874–Leu939 form a coiled coil.

This sequence belongs to the class-I aminoacyl-tRNA synthetase family. ValS type 1 subfamily. In terms of assembly, monomer.

The protein localises to the cytoplasm. It catalyses the reaction tRNA(Val) + L-valine + ATP = L-valyl-tRNA(Val) + AMP + diphosphate. In terms of biological role, catalyzes the attachment of valine to tRNA(Val). As ValRS can inadvertently accommodate and process structurally similar amino acids such as threonine, to avoid such errors, it has a 'posttransfer' editing activity that hydrolyzes mischarged Thr-tRNA(Val) in a tRNA-dependent manner. This is Valine--tRNA ligase from Chlamydia trachomatis serovar L2 (strain ATCC VR-902B / DSM 19102 / 434/Bu).